A 24-amino-acid polypeptide reads, in one-letter code: MTKKAVVVLWGISQVEGVVNLLQE.

This sequence belongs to the Cu-Zn superoxide dismutase family. Homodimer. Requires Cu cation as cofactor. Zn(2+) serves as cofactor.

The protein localises to the plastid. It localises to the chloroplast. The enzyme catalyses 2 superoxide + 2 H(+) = H2O2 + O2. In terms of biological role, destroys radicals which are normally produced within the cells and which are toxic to biological systems. In Picea abies (Norway spruce), this protein is Superoxide dismutase [Cu-Zn], chloroplastic.